The sequence spans 65 residues: Large ribosomal subunit protein bL35 (65 aa).

A disordered region spans residues 1–26 (MPKIKTLRGAAKRFKKTASGGFKRKQ). Basic residues predominate over residues 10–26 (AAKRFKKTASGGFKRKQ).

This sequence belongs to the bacterial ribosomal protein bL35 family.

This is Large ribosomal subunit protein bL35 from Histophilus somni (strain 2336) (Haemophilus somnus).